A 359-amino-acid chain; its full sequence is 3-dehydroquinate synthase (359 aa).

NAD(+) contacts are provided by residues 106-110 (GVVGD), 130-131 (TT), lysine 143, lysine 152, and 170-173 (TLQT). Zn(2+) is bound by residues glutamate 185, histidine 248, and histidine 265.

The protein belongs to the sugar phosphate cyclases superfamily. Dehydroquinate synthase family. The cofactor is Co(2+). Requires Zn(2+) as cofactor. NAD(+) is required as a cofactor.

The protein resides in the cytoplasm. The catalysed reaction is 7-phospho-2-dehydro-3-deoxy-D-arabino-heptonate = 3-dehydroquinate + phosphate. It functions in the pathway metabolic intermediate biosynthesis; chorismate biosynthesis; chorismate from D-erythrose 4-phosphate and phosphoenolpyruvate: step 2/7. Functionally, catalyzes the conversion of 3-deoxy-D-arabino-heptulosonate 7-phosphate (DAHP) to dehydroquinate (DHQ). The protein is 3-dehydroquinate synthase of Desulforamulus reducens (strain ATCC BAA-1160 / DSM 100696 / MI-1) (Desulfotomaculum reducens).